Here is a 443-residue protein sequence, read N- to C-terminus: MVRRRVLLATFPAQGHINPALQFAKRLLKAGTDVTFFTSVYAWRRMANTASAAAGNPPGLDFVAFSDGYDDGLKPGGDGKRYMSEMKARGSEALRNLLLNNDDVTFVVYSHLFAWAAEVARLSHVPTALLWVEPATVLCIYHFYFNGYADEIDAGSNEIQLPRLPSLEQRSLPTFLLPATPERFRLMMKEKLETLDGEEKAKVLVNTFDALEPDALTAIDRYELIGIGPLIPSAFLDGEDPSETSYGGDLFEKSEENNCVEWLNSKPKSSVVYVSFGSVLRFPKAQMEEIGKGLLACGRPFLWMIREQKNDDGEEEEEEEELSCIGELKKMGKIVSWCSQLEVLAHPALGCFVTHCGWNSAVESLSCGIPVVAVPQWFDQTTNAKLIEDAWGTGVRVRMNEGGGVDGCEIERCVEMVMDGGDKTKLVRENAIKWKTLARQAMG.

The signal sequence occupies residues 1 to 22 (MVRRRVLLATFPAQGHINPALQ). His-16 acts as the Proton acceptor in catalysis. His-16 contacts an anthocyanidin. UDP-alpha-D-glucose contacts are provided by Gln-340, His-355, Trp-358, Asn-359, Ser-360, Glu-363, Asp-379, and Gln-380.

The protein belongs to the UDP-glycosyltransferase family.

The enzyme catalyses an anthocyanidin 3-O-beta-D-glucoside + UDP-alpha-D-glucose = an anthocyanidin 3,5-di-O-beta-D-glucoside + UDP + 2 H(+). It functions in the pathway pigment biosynthesis; anthocyanin biosynthesis. In terms of biological role, catalyzes the glucosylation at the O-5 position of anthocyanidin 3-glucosides to form anthocyanidin 3,5-di-O-glucosides using UDP-glucose as sugar donor. Anthocyanidin 3,5-di-O-glucosides are molecules that are responsible for pigmentation. Also acts on anthocyanidin 3-O-(6-O-malonylglucoside). Much less active with hydroxycinnamoylglucose derivatives. No activity in the absence of the 3-O-glucoside group. The sequence is that of Anthocyanidin 3-O-glucoside 5-O-glucosyltransferase 2 (PF3R6) from Perilla frutescens (Beefsteak mint).